The primary structure comprises 512 residues: uncharacterized protein (512 aa).

An N-terminal signal peptide occupies residues 1-22 (MVSSLIYSLCAVSGLLATTVNG). Asparagine 167 carries an N-linked (GlcNAc...) asparagine glycan. Positions 251–282 (SAASPPIYEPDRQTDPEDPETGRNNNQGFEGL) are disordered.

The protein localises to the secreted. This is an uncharacterized protein from Arthroderma benhamiae (strain ATCC MYA-4681 / CBS 112371) (Trichophyton mentagrophytes).